The chain runs to 1243 residues: ATP-dependent helicase/nuclease subunit A (1243 aa).

In terms of domain architecture, UvrD-like helicase ATP-binding spans Val-2–Arg-475. Ala-23–Thr-30 provides a ligand contact to ATP. A UvrD-like helicase C-terminal domain is found at Ala-502–Gly-803.

The protein belongs to the helicase family. AddA subfamily. Heterodimer of AddA and AddB/RexB. Mg(2+) is required as a cofactor.

The enzyme catalyses Couples ATP hydrolysis with the unwinding of duplex DNA by translocating in the 3'-5' direction.. The catalysed reaction is ATP + H2O = ADP + phosphate + H(+). The heterodimer acts as both an ATP-dependent DNA helicase and an ATP-dependent, dual-direction single-stranded exonuclease. Recognizes the chi site generating a DNA molecule suitable for the initiation of homologous recombination. The AddA nuclease domain is required for chi fragment generation; this subunit has the helicase and 3' -&gt; 5' nuclease activities. This Oceanobacillus iheyensis (strain DSM 14371 / CIP 107618 / JCM 11309 / KCTC 3954 / HTE831) protein is ATP-dependent helicase/nuclease subunit A.